Here is a 636-residue protein sequence, read N- to C-terminus: LDL receptor repeat-containing protein egg-1 (636 aa).

Over 1-130 (MSSIAQKNRN…NHSNLFQCPS (130 aa)) the chain is Cytoplasmic. Residues 131 to 151 (VAIVLVLALVILGVLAAIPLT) form a helical; Signal-anchor for type II membrane protein membrane-spanning segment. Residues 152–636 (LMLTSSAQKM…VLKNSGRFPY (485 aa)) are Extracellular-facing. Residue Asn-202 is glycosylated (N-linked (GlcNAc...) asparagine). LDL-receptor class A domains are found at residues 205–243 (TCSG…ENCK), 244–296 (ECQS…AMCK), 298–335 (TCSK…NNCN), 336–375 (KCQK…QQCD), 378–415 (TCSG…ENCP), 457–499 (KCHP…KNCT), 503–541 (ECGI…QNCS), and 542–579 (QCAS…LKCS). Disulfide bonds link Cys-213/Cys-233, Cys-227/Cys-242, Cys-245/Cys-273, Cys-251/Cys-286, Cys-280/Cys-295, Cys-299/Cys-312, Cys-306/Cys-325, Cys-319/Cys-334, Cys-337/Cys-365, Cys-359/Cys-374, Cys-379/Cys-392, Cys-387/Cys-405, Cys-399/Cys-414, Cys-458/Cys-476, Cys-466/Cys-489, Cys-483/Cys-498, Cys-504/Cys-518, Cys-514/Cys-531, Cys-525/Cys-540, Cys-543/Cys-556, Cys-550/Cys-569, and Cys-563/Cys-578. Asn-508 is a glycosylation site (N-linked (GlcNAc...) asparagine). Asn-614 is a glycosylation site (N-linked (GlcNAc...) asparagine).

It localises to the cell membrane. In terms of biological role, probable receptor which is required for the oocyte-to-zygote transition although its exact function is controversial. Seems to be required for fertilization probably by promoting the interaction or fusion between sperm and oocyte. Conversely, shown to be dispensable for fertilization but required for the formation of a continuous and cohesive eggshell chitin layer by maintaining a homogenous distribution of chitin synthase chs-1 at the unfertilized oocyte cell membrane. Appears to recruit or maintain together to the unfertilized oocyte cortex several proteins including chs-1, kinase mbk-2 and pseudophosphatases egg-3, and possibly egg-4 and egg-5. This Caenorhabditis briggsae protein is LDL receptor repeat-containing protein egg-1.